Reading from the N-terminus, the 155-residue chain is Small ribosomal subunit protein bS6 (155 aa).

A disordered region spans residues 94–155 (EKHEEGPSAM…RPRRPREDRV (62 aa)).

This sequence belongs to the bacterial ribosomal protein bS6 family.

Functionally, binds together with bS18 to 16S ribosomal RNA. The polypeptide is Small ribosomal subunit protein bS6 (Rhizobium johnstonii (strain DSM 114642 / LMG 32736 / 3841) (Rhizobium leguminosarum bv. viciae)).